We begin with the raw amino-acid sequence, 111 residues long: UPF0060 membrane protein Ajs_1473 (111 aa).

Transmembrane regions (helical) follow at residues isoleucine 8–valine 28, serine 33–leucine 53, tyrosine 65–leucine 85, and tryptophan 88–alanine 108.

It belongs to the UPF0060 family.

The protein resides in the cell inner membrane. The chain is UPF0060 membrane protein Ajs_1473 from Acidovorax sp. (strain JS42).